We begin with the raw amino-acid sequence, 485 residues long: Mitochondrial metalloendopeptidase OMA1 (485 aa).

The transit peptide at 1 to 16 directs the protein to the mitochondrion; sequence MKPSLKRRLLLLSRKF. Residues 17–147 are Mitochondrial matrix-facing; the sequence is AKASIRKLLR…GPGRWFQNPR (131 aa). The helical transmembrane segment at 148–168 threads the bilayer; that stretch reads TVFTVVLVGSVGLITLIVGNT. Over 169 to 485 the chain is Mitochondrial intermembrane; sequence ETIPYTKRTH…AGRTGVEGFL (317 aa). A Zn(2+)-binding site is contributed by histidine 352. Glutamate 353 is an active-site residue. Residues histidine 356 and glutamate 405 each contribute to the Zn(2+) site. Positions 456–485 are required for protease activation; the sequence is KLLAQANVMEEALMIYREVQAGRTGVEGFL.

This sequence belongs to the peptidase M48A family. As to quaternary structure, homooligomer. Requires Zn(2+) as cofactor.

The protein resides in the mitochondrion inner membrane. Its function is as follows. Protease that is part of the quality control system in the inner membrane of mitochondria. Metalloendopeptidase that modulates the oxidative phosphorylation (OXPHOS) system and plant growth. Involved in tolerance mechanisms to heat, osmotic and oxidative stresses. This is Mitochondrial metalloendopeptidase OMA1 from Arabidopsis thaliana (Mouse-ear cress).